A 100-amino-acid polypeptide reads, in one-letter code: Urease subunit gamma (100 aa).

Belongs to the urease gamma subunit family. As to quaternary structure, heterotrimer of UreA (gamma), UreB (beta) and UreC (alpha) subunits. Three heterotrimers associate to form the active enzyme.

It localises to the cytoplasm. The enzyme catalyses urea + 2 H2O + H(+) = hydrogencarbonate + 2 NH4(+). It participates in nitrogen metabolism; urea degradation; CO(2) and NH(3) from urea (urease route): step 1/1. The polypeptide is Urease subunit gamma (Pseudomonas fluorescens (strain ATCC BAA-477 / NRRL B-23932 / Pf-5)).